Reading from the N-terminus, the 627-residue chain is Probable inactive receptor kinase At3g02880 (627 aa).

Residues 1–23 form the signal peptide; that stretch reads MKYKRKLSLSVVFLFVFYLAAVT. LRR repeat units follow at residues 91–112, 115–137, 139–161, 163–184, and 185–206; these read QLKT…DFSN, LLRY…LFTL, SIIR…VNSA, RLVT…ITLP, and LQQF…LSSW. Residues 222 to 246 are disordered; that stretch reads DTCEAESPNGGDAGGPNTPPEKKDS. Residues 253–273 form a helical membrane-spanning segment; it reads AIVGIVIGCVVGLLLLLLILF. A Protein kinase domain is found at 345–620; it reads KASAEVLGKG…LIEEVSHSSG (276 aa). At S347 the chain carries Phosphoserine. ATP is bound by residues 351–359 and K373; that span reads LGKGTVGSS. A helical membrane pass occupies residues 389–409; the sequence is LHVLGSMSHANLVTLIAYYFS. S424 carries the phosphoserine modification. A Phosphothreonine modification is found at T444. S519 is modified (phosphoserine). At T595 the chain carries Phosphothreonine. Residues S621 and S626 each carry the phosphoserine modification.

This sequence belongs to the protein kinase superfamily. Ser/Thr protein kinase family.

Its subcellular location is the membrane. In Arabidopsis thaliana (Mouse-ear cress), this protein is Probable inactive receptor kinase At3g02880.